A 535-amino-acid polypeptide reads, in one-letter code: Xylan 1,3-beta-xylosidase (535 aa).

The active-site Proton acceptor is Asp16. The active-site Proton donor is Glu189.

The protein belongs to the glycosyl hydrolase 43 family.

It carries out the reaction Hydrolysis of successive xylose residues from the non-reducing termini of (1-&gt;3)-beta-D-xylans.. Its activity is regulated as follows. Inhibited by Ag(+), Cu(2+), Hg(2+), Mn(2+), Pb(2+), Zn(2+) and p-chloromercuric benzoic acid. Beta-1,3-xylosidase that hydrolyzes beta-1,3-xylooligosaccharides to D-xylose. In Vibrio sp, this protein is Xylan 1,3-beta-xylosidase (xloA).